We begin with the raw amino-acid sequence, 404 residues long: Cysteine desulfurase IscS (404 aa).

Pyridoxal 5'-phosphate-binding positions include 75-76, Asn155, Gln183, and 203-205; these read AT and SAH. Lys206 carries the N6-(pyridoxal phosphate)lysine modification. Thr243 provides a ligand contact to pyridoxal 5'-phosphate. Cys328 serves as the catalytic Cysteine persulfide intermediate. Cys328 is a [2Fe-2S] cluster binding site.

Belongs to the class-V pyridoxal-phosphate-dependent aminotransferase family. NifS/IscS subfamily. In terms of assembly, homodimer. Forms a heterotetramer with IscU, interacts with other sulfur acceptors. Requires pyridoxal 5'-phosphate as cofactor.

The protein resides in the cytoplasm. It catalyses the reaction (sulfur carrier)-H + L-cysteine = (sulfur carrier)-SH + L-alanine. The protein operates within cofactor biosynthesis; iron-sulfur cluster biosynthesis. In terms of biological role, master enzyme that delivers sulfur to a number of partners involved in Fe-S cluster assembly, tRNA modification or cofactor biosynthesis. Catalyzes the removal of elemental sulfur atoms from cysteine to produce alanine. Functions as a sulfur delivery protein for Fe-S cluster synthesis onto IscU, an Fe-S scaffold assembly protein, as well as other S acceptor proteins. The sequence is that of Cysteine desulfurase IscS from Vibrio cholerae serotype O1 (strain M66-2).